A 157-amino-acid polypeptide reads, in one-letter code: MSQVILDLQIACADSQGLPTEGDFQRWLEAVLPLFQPVSEVTIRLVDEAESHDLNLTYRGKDKSTNVLSFPFEAPPEIELPLLGDLIICRQVVEKEAIEQEKALLAHWAHMVVHGSLHLLGYDHIDDEEAEEMELIETEIMHGLGYPDPYISEKDPD.

Positions 114, 118, and 124 each coordinate Zn(2+).

The protein belongs to the endoribonuclease YbeY family. It depends on Zn(2+) as a cofactor.

It localises to the cytoplasm. Its function is as follows. Single strand-specific metallo-endoribonuclease involved in late-stage 70S ribosome quality control and in maturation of the 3' terminus of the 16S rRNA. The protein is Endoribonuclease YbeY of Yersinia pestis.